A 601-amino-acid polypeptide reads, in one-letter code: tRNA 5-methylaminomethyl-2-thiouridine biosynthesis bifunctional protein MnmC (601 aa).

Residues 1-237 form a tRNA (mnm(5)s(2)U34)-methyltransferase region; sequence MSDPTASPLI…KKQRLEAVAP (237 aa). The FAD-dependent cmnm(5)s(2)U34 oxidoreductase stretch occupies residues 252–601; sequence IGGGIAGAAM…FSSRVATGAV (350 aa).

It in the N-terminal section; belongs to the methyltransferase superfamily. tRNA (mnm(5)s(2)U34)-methyltransferase family. This sequence in the C-terminal section; belongs to the DAO family. It depends on FAD as a cofactor.

The protein localises to the cytoplasm. The enzyme catalyses 5-aminomethyl-2-thiouridine(34) in tRNA + S-adenosyl-L-methionine = 5-methylaminomethyl-2-thiouridine(34) in tRNA + S-adenosyl-L-homocysteine + H(+). Catalyzes the last two steps in the biosynthesis of 5-methylaminomethyl-2-thiouridine (mnm(5)s(2)U) at the wobble position (U34) in tRNA. Catalyzes the FAD-dependent demodification of cmnm(5)s(2)U34 to nm(5)s(2)U34, followed by the transfer of a methyl group from S-adenosyl-L-methionine to nm(5)s(2)U34, to form mnm(5)s(2)U34. The polypeptide is tRNA 5-methylaminomethyl-2-thiouridine biosynthesis bifunctional protein MnmC (Caulobacter sp. (strain K31)).